A 289-amino-acid chain; its full sequence is MDGILNINKPEGMTSFDVVRKVRFMLKNEKVGHTGTLDPMASGVLPICVGRATKFADYMVESKKIYLAELRLGITTETYDREGSVVNTRGVYLKKKDIIEEILSFQGEIEQVPPMYSALKVNGRRLYELARKGIEIERKKRKITIYSIDIVNIELPYVSFKVTCSKGTYIRSLCNDIGNNLNCGGTMWNLKRLSTGNFNIADSIALEYLDSENILKYIIPIDKALYGYPEVLVEDEYVKKILNGISIKDESFLSKTIKDKLYRVYIEGNKFIGIGMNKDFQFKMVKLFV.

The Nucleophile role is filled by Asp-38.

It belongs to the pseudouridine synthase TruB family. Type 1 subfamily.

It catalyses the reaction uridine(55) in tRNA = pseudouridine(55) in tRNA. Functionally, responsible for synthesis of pseudouridine from uracil-55 in the psi GC loop of transfer RNAs. This Clostridium kluyveri (strain ATCC 8527 / DSM 555 / NBRC 12016 / NCIMB 10680 / K1) protein is tRNA pseudouridine synthase B.